The sequence spans 153 residues: Transcriptional repressor NrdR (153 aa).

A zinc finger spans residues 3–34; that stretch reads CPFCHNQDTRVIDSRAAEEGTAIRRRRSCPAC. The ATP-cone domain maps to 46–136; that stretch reads LMVTKRSGAT…VYRSFESLED (91 aa).

The protein belongs to the NrdR family. Zn(2+) is required as a cofactor.

Its function is as follows. Negatively regulates transcription of bacterial ribonucleotide reductase nrd genes and operons by binding to NrdR-boxes. This chain is Transcriptional repressor NrdR, found in Thermobifida fusca (strain YX).